The sequence spans 762 residues: Polyribonucleotide nucleotidyltransferase (762 aa).

The Mg(2+) site is built by Asp531 and Asp537. One can recognise a KH domain in the interval 597–656; the sequence is PRVTTIKVPVDKIGEVIGPKGKVINSITEETRAQISIEDDGTVFVGATDGPSAQAAIDKI. Residues 668–737 form the S1 motif domain; sequence GERFLGTVVK…KRGKISLVLV (70 aa).

It belongs to the polyribonucleotide nucleotidyltransferase family. Mg(2+) serves as cofactor.

The protein resides in the cytoplasm. The catalysed reaction is RNA(n+1) + phosphate = RNA(n) + a ribonucleoside 5'-diphosphate. Involved in mRNA degradation. Catalyzes the phosphorolysis of single-stranded polyribonucleotides processively in the 3'- to 5'-direction. The protein is Polyribonucleotide nucleotidyltransferase of Mycobacterium ulcerans (strain Agy99).